Here is a 412-residue protein sequence, read N- to C-terminus: Translation initiation factor 2 subunit gamma (412 aa).

The region spanning Q7–D203 is the tr-type G domain. Residues G16–T23 are G1. Mg(2+)-binding residues include D19, T23, G44, and S46. GTP is bound at residue D19 to T24. Residues G44–R48 form a G2 region. The segment at D90–G93 is G3. Residues N146–D149 and S181–Q183 each bind GTP. The G4 stretch occupies residues N146–D149. The interval S181–Q183 is G5.

The protein belongs to the TRAFAC class translation factor GTPase superfamily. Classic translation factor GTPase family. EIF2G subfamily. In terms of assembly, heterotrimer composed of an alpha, a beta and a gamma chain. Mg(2+) is required as a cofactor.

The catalysed reaction is GTP + H2O = GDP + phosphate + H(+). In terms of biological role, eIF-2 functions in the early steps of protein synthesis by forming a ternary complex with GTP and initiator tRNA. The polypeptide is Translation initiation factor 2 subunit gamma (Halorubrum lacusprofundi (strain ATCC 49239 / DSM 5036 / JCM 8891 / ACAM 34)).